We begin with the raw amino-acid sequence, 157 residues long: Class 10 plant pathogenesis-related protein 2E (157 aa).

A trans-zeatin-binding site is contributed by D8. Residues P32, V35, and I38 each coordinate Ca(2+). Trans-zeatin-binding residues include E60, H69, Y81, and Y83.

This sequence belongs to the BetVI family.

Its subcellular location is the cytoplasm. The protein resides in the cytosol. Class II ribonuclease (RNase). Binds to cytokinins. Interacts with melatonin. This chain is Class 10 plant pathogenesis-related protein 2E, found in Lupinus luteus (European yellow lupine).